The following is an 815-amino-acid chain: Calpain-3 (815 aa).

A disordered region spans residues 7-36; that stretch reads ASVAPRTAAEPRSPGPVPHPAQSKATEAGG. The 344-residue stretch at 74 to 417 folds into the Calpain catalytic domain; sequence LYVDPEFPPD…FTKLEICNLT (344 aa). Active-site residues include C129, H334, and N358. The segment at 418–586 is domain III; that stretch reads ADALQSDKLQ…KRNLSEEVEN (169 aa). The linker stretch occupies residues 587–649; that stretch reads TISVDRPVPI…QESEEQQQFR (63 aa). The segment at 605 to 646 is disordered; sequence SNKELGVDQESEEGKGKTSPDKQEQSPQPQPGSSDQESEEQQ. Basic and acidic residues predominate over residues 616 to 628; it reads EEGKGKTSPDKQE. Low complexity predominate over residues 629–639; it reads QSPQPQPGSSD. EF-hand domains follow at residues 643–677, 686–719, 716–751, and 781–815; these read EEQQ…VVNK, FTLE…NKIK, NKIK…AGFH, and VRLE…TMYA. The tract at residues 650–815 is domain IV; sequence NIFKQIAGDD…LEWLQLTMYA (166 aa). A656, D659, E661, E666, D699, D701, S703, K705, E710, D729, D731, S733, T735, E740, D794, D796, D798, and I800 together coordinate Ca(2+).

It belongs to the peptidase C2 family. Homodimer; via EF-hand domain 4. Interacts with TTN/titin. Interacts with CMYA5; this interaction, which results in CMYA5 proteolysis, may protect CAPN3 from autolysis. Interacts with SIMC1. Interacts with UTP25; the interaction is required for CAPN3 translocation to the nucleolus.

It localises to the cytoplasm. The protein localises to the nucleus. The protein resides in the nucleolus. The catalysed reaction is Broad endopeptidase activity.. Its activity is regulated as follows. Activated by micromolar concentrations of calcium and inhibited by calpastatin. In terms of biological role, calcium-regulated non-lysosomal thiol-protease. Proteolytically cleaves CTBP1. Mediates, with UTP25, the proteasome-independent degradation of p53/TP53. The chain is Calpain-3 (CAPN3) from Macaca fascicularis (Crab-eating macaque).